A 617-amino-acid chain; its full sequence is MEVKNFAVWDYVVFAALFIISSGIGVFYAIKERKKATSREFLVGGRQMSFGPVALSLTASFMSAVTVLGTPADVYRFGASFVLFFITYGLVIILTSELFLPVFYRSGITSTYEYLQLRFNKPVRYAATVIYIVQTILYTGVVVYAPALALNQVTGFDLWGSVFATGIVCTFYCTLGGLKAVVWTDAFQMVVMIVGFLTVLIQGSTYAGGLHNVLEQAENGSRLNIFDFDIDPLRRHTFWTISVGGTFTWLGIYGVNQSTIQRCISCKTEKHAKLALYFNLLGLWIILLCAVFSGLTMYAHFKDCDPWTSGIISAPDQLMPYFVMELFSTMPGLPGLFVACAFSGTLSTVAASINALATVTFEDFVKSCFPRLSDKLSTWISKGLCLLFGVICTSTAVAASLMGGVIQAALSIHGMCGGPMLGLFSLGILFPFVNWKGALAGLLTGILLSFWVAIGAFIYPAPASKTWPLPLSTDQCGLSNVTESVPPVLSSRPAIAETWYALSYLHYSTVGCLGCIAAGVIISFLTGLQKGKDIPPLLIRPVCNLFCFWSKKYKTLCWCGVQHDSGTEQENLENDSTWKQGAESVLQNGLKQESLVPGYDPKDKSYDNMALEKITHF.

The Extracellular segment spans residues 1 to 5; it reads MEVKN. A helical transmembrane segment spans residues 6–26; the sequence is FAVWDYVVFAALFIISSGIGV. Topologically, residues 27–47 are cytoplasmic; it reads FYAIKERKKATSREFLVGGRQ. Residues 48-68 traverse the membrane as a helical segment; it reads MSFGPVALSLTASFMSAVTVL. The Extracellular portion of the chain corresponds to 69 to 80; sequence GTPADVYRFGAS. A helical membrane pass occupies residues 81–101; the sequence is FVLFFITYGLVIILTSELFLP. Residues 102–128 are Cytoplasmic-facing; the sequence is VFYRSGITSTYEYLQLRFNKPVRYAAT. A helical transmembrane segment spans residues 129–149; sequence VIYIVQTILYTGVVVYAPALA. At 150 to 157 the chain is on the extracellular side; that stretch reads LNQVTGFD. Residues 158–178 traverse the membrane as a helical segment; sequence LWGSVFATGIVCTFYCTLGGL. The Cytoplasmic segment spans residues 179-180; the sequence is KA. The helical transmembrane segment at 181-201 threads the bilayer; sequence VVWTDAFQMVVMIVGFLTVLI. The Extracellular segment spans residues 202–235; it reads QGSTYAGGLHNVLEQAENGSRLNIFDFDIDPLRR. N-linked (GlcNAc...) asparagine glycosylation occurs at Asn-219. Residues 236-256 traverse the membrane as a helical segment; sequence HTFWTISVGGTFTWLGIYGVN. Residues 257-273 lie on the Cytoplasmic side of the membrane; sequence QSTIQRCISCKTEKHAK. Residues 274-294 traverse the membrane as a helical segment; that stretch reads LALYFNLLGLWIILLCAVFSG. Topologically, residues 295–334 are extracellular; sequence LTMYAHFKDCDPWTSGIISAPDQLMPYFVMELFSTMPGLP. Residues 335–357 form a helical membrane-spanning segment; that stretch reads GLFVACAFSGTLSTVAASINALA. Over 358-385 the chain is Cytoplasmic; it reads TVTFEDFVKSCFPRLSDKLSTWISKGLC. The chain crosses the membrane as a helical span at residues 386-406; the sequence is LLFGVICTSTAVAASLMGGVI. At 407-411 the chain is on the extracellular side; that stretch reads QAALS. A helical transmembrane segment spans residues 412-432; the sequence is IHGMCGGPMLGLFSLGILFPF. Topologically, residues 433-437 are cytoplasmic; that stretch reads VNWKG. A helical membrane pass occupies residues 438–458; that stretch reads ALAGLLTGILLSFWVAIGAFI. Topologically, residues 459 to 507 are extracellular; sequence YPAPASKTWPLPLSTDQCGLSNVTESVPPVLSSRPAIAETWYALSYLHY. Asn-480 is a glycosylation site (N-linked (GlcNAc...) asparagine). Residues 508-528 traverse the membrane as a helical segment; the sequence is STVGCLGCIAAGVIISFLTGL. The Cytoplasmic portion of the chain corresponds to 529 to 617; sequence QKGKDIPPLL…NMALEKITHF (89 aa).

The protein belongs to the sodium:solute symporter (SSF) (TC 2.A.21) family.

The protein resides in the apical cell membrane. The enzyme catalyses (S)-lactate(out) + Na(+)(out) = (S)-lactate(in) + Na(+)(in). It carries out the reaction nicotinate(out) + Na(+)(out) = nicotinate(in) + Na(+)(in). It catalyses the reaction pyruvate(out) + Na(+)(out) = pyruvate(in) + Na(+)(in). The catalysed reaction is propanoate(out) + Na(+)(out) = propanoate(in) + Na(+)(in). The enzyme catalyses butanoate(out) + Na(+)(out) = butanoate(in) + Na(+)(in). It carries out the reaction acetoacetate(out) + Na(+)(out) = acetoacetate(in) + Na(+)(in). In terms of biological role, acts as an electroneutral and low-affinity sodium (Na(+))-dependent sodium-coupled solute transporter. Catalyzes the transport across the plasma membrane of many monocarboxylates such as lactate, pyruvate, nicotinate, propionate, butyrate and beta-D-hydroxybutyrate. May be responsible for the first step of reabsorption of monocarboxylates from the lumen of the proximal tubule of the kidney and the small intestine. May play also a role in monocarboxylates transport in the retina. Mediates electroneutral uptake of lactate, with a stoichiometry of 2 Na(+) for each lactate. The chain is Sodium-coupled monocarboxylate transporter 2 (SLC5A12) from Bos taurus (Bovine).